Reading from the N-terminus, the 757-residue chain is 5-methyltetrahydropteroyltriglutamate--homocysteine methyltransferase (757 aa).

5-methyltetrahydropteroyltri-L-glutamate is bound by residues 17–20 and lysine 115; that span reads RELK. L-homocysteine is bound by residues 430-432 and glutamate 483; that span reads IGS. Residues 430 to 432 and glutamate 483 each bind L-methionine; that span reads IGS. 5-methyltetrahydropteroyltri-L-glutamate-binding positions include 514–515 and tryptophan 560; that span reads RC. Aspartate 598 lines the L-homocysteine pocket. Position 598 (aspartate 598) interacts with L-methionine. Glutamate 604 contributes to the 5-methyltetrahydropteroyltri-L-glutamate binding site. 3 residues coordinate Zn(2+): histidine 640, cysteine 642, and glutamate 664. Catalysis depends on histidine 693, which acts as the Proton donor. Cysteine 725 contributes to the Zn(2+) binding site.

This sequence belongs to the vitamin-B12 independent methionine synthase family. Zn(2+) serves as cofactor.

The catalysed reaction is 5-methyltetrahydropteroyltri-L-glutamate + L-homocysteine = tetrahydropteroyltri-L-glutamate + L-methionine. It functions in the pathway amino-acid biosynthesis; L-methionine biosynthesis via de novo pathway; L-methionine from L-homocysteine (MetE route): step 1/1. Its function is as follows. Catalyzes the transfer of a methyl group from 5-methyltetrahydrofolate to homocysteine resulting in methionine formation. The polypeptide is 5-methyltetrahydropteroyltriglutamate--homocysteine methyltransferase (Buchnera aphidicola subsp. Schizaphis graminum (strain Sg)).